A 218-amino-acid polypeptide reads, in one-letter code: Twisted gastrulation protein homolog 1-B (218 aa).

Residues 1-25 (MKPSFLHIPAAALLLCSLWILPIHC) form the signal peptide. N-linked (GlcNAc...) asparagine glycans are attached at residues asparagine 52, asparagine 81, and asparagine 147.

Belongs to the twisted gastrulation protein family. In terms of assembly, binds directly to bmp2, bmp4 and bmp7 and can form a ternary complex with bmps and chordin, thus preventing the binding of bmps to their cell surface receptors.

The protein localises to the secreted. Functionally, involved in dorsal-ventral patterning, permitting peak BMP signaling by antagonizing the residual anti-BMP activity of the cleavage products of chrd. Functions to promote the formation of ventral mesoderm by increasing the activity of bmp7 and other BMPS. Seems to antagonize BMP signaling by forming ternary complexes with chrd and BMPs, thereby preventing BMPs from binding to their receptors. In addition to the anti-BMP function, also has pro-BMP activity, partly mediated by cleavage and degradation of chrd, which releases BMPs from ternary complexes. May be an important modulator of BMP-regulated cartilage development and chondrocyte differentiation. The chain is Twisted gastrulation protein homolog 1-B (twsg1-b) from Xenopus laevis (African clawed frog).